The chain runs to 290 residues: ATP synthase gamma chain (290 aa).

Belongs to the ATPase gamma chain family. In terms of assembly, F-type ATPases have 2 components, CF(1) - the catalytic core - and CF(0) - the membrane proton channel. CF(1) has five subunits: alpha(3), beta(3), gamma(1), delta(1), epsilon(1). CF(0) has three main subunits: a, b and c.

The protein resides in the cell membrane. Its function is as follows. Produces ATP from ADP in the presence of a proton gradient across the membrane. The gamma chain is believed to be important in regulating ATPase activity and the flow of protons through the CF(0) complex. The polypeptide is ATP synthase gamma chain (Listeria innocua serovar 6a (strain ATCC BAA-680 / CLIP 11262)).